A 491-amino-acid polypeptide reads, in one-letter code: Glutamyl-tRNA(Gln) amidotransferase subunit A (491 aa).

Residues lysine 77 and serine 152 each act as charge relay system in the active site. The active-site Acyl-ester intermediate is the serine 176.

Belongs to the amidase family. GatA subfamily. Heterotrimer of A, B and C subunits.

It carries out the reaction L-glutamyl-tRNA(Gln) + L-glutamine + ATP + H2O = L-glutaminyl-tRNA(Gln) + L-glutamate + ADP + phosphate + H(+). Functionally, allows the formation of correctly charged Gln-tRNA(Gln) through the transamidation of misacylated Glu-tRNA(Gln) in organisms which lack glutaminyl-tRNA synthetase. The reaction takes place in the presence of glutamine and ATP through an activated gamma-phospho-Glu-tRNA(Gln). In Chlamydia muridarum (strain MoPn / Nigg), this protein is Glutamyl-tRNA(Gln) amidotransferase subunit A (gatA).